The primary structure comprises 493 residues: 2-amino-4-deoxychorismate synthase (493 aa).

This sequence belongs to the anthranilate synthase component I family. It depends on Mg(2+) as a cofactor.

It carries out the reaction (2S)-2-amino-4-deoxychorismate + L-glutamate = chorismate + L-glutamine. Functionally, converts chorismate to 2-amino-4-deoxychorismate (ADIC). Involved in the biosynthesis of the benzoxazolinate moiety of the enediyne antitumor antibiotic C-1027. This is 2-amino-4-deoxychorismate synthase (sgcD) from Streptomyces globisporus.